The sequence spans 375 residues: Killer cell immunoglobulin-like receptor 2DL5B (375 aa).

Residues 1 to 21 (MSLMVVSMACVGFFLLQGAWT) form the signal peptide. The Extracellular portion of the chain corresponds to 22-238 (HEGGQDKPLL…PSSKTGIRRH (217 aa)). Ig-like C2-type domains follow at residues 42-102 (GGHV…HPRS) and 137-200 (GENV…LHDS). 2 disulfides stabilise this stretch: Cys-49/Cys-95 and Cys-144/Cys-193. The disordered stretch occupies residues 213–233 (VSVTGNSSSSSSSPTEPSSKT). N-linked (GlcNAc...) asparagine glycosylation is present at Asn-218. A compositionally biased stretch (low complexity) spans 219 to 231 (SSSSSSSPTEPSS). Residues 239–259 (LHILIGTSVAIILFIILFFFL) traverse the membrane as a helical segment. The Cytoplasmic segment spans residues 260–375 (LHCCCSNKKN…ASSHVPAAGI (116 aa)). Residues 334-375 (AKPRSLSPAHKHHSQALRGSSRETTALSQNRVASSHVPAAGI) are disordered. Polar residues predominate over residues 355-366 (RETTALSQNRVA).

This sequence belongs to the immunoglobulin superfamily.

It localises to the cell membrane. In terms of biological role, receptor on natural killer (NK) cells for HLA-C alleles. Inhibits the activity of NK cells thus preventing cell lysis. This Homo sapiens (Human) protein is Killer cell immunoglobulin-like receptor 2DL5B (KIR2DL5B).